A 1240-amino-acid chain; its full sequence is DNA polymerase II large subunit (1240 aa).

This sequence belongs to the archaeal DNA polymerase II family. As to quaternary structure, heterodimer of a large subunit and a small subunit.

The enzyme catalyses DNA(n) + a 2'-deoxyribonucleoside 5'-triphosphate = DNA(n+1) + diphosphate. The catalysed reaction is Exonucleolytic cleavage in the 3'- to 5'-direction to yield nucleoside 5'-phosphates.. Its function is as follows. Possesses two activities: a DNA synthesis (polymerase) and an exonucleolytic activity that degrades single-stranded DNA in the 3'- to 5'-direction. Has a template-primer preference which is characteristic of a replicative DNA polymerase. The protein is DNA polymerase II large subunit of Methanopyrus kandleri (strain AV19 / DSM 6324 / JCM 9639 / NBRC 100938).